A 163-amino-acid chain; its full sequence is Photosystem II extrinsic protein V (163 aa).

The first 26 residues, 1–26, serve as a signal peptide directing secretion; that stretch reads MLKRSSWLATLLGLLTVASVSTIVYA. Heme c is bound by residues Cys-63, Cys-66, His-67, and His-118.

Belongs to the cytochrome c family. PsbV subfamily. As to quaternary structure, PSII is composed of 1 copy each of membrane proteins PsbA, PsbB, PsbC, PsbD, PsbE, PsbF, PsbH, PsbI, PsbJ, PsbK, PsbL, PsbM, PsbT, PsbY, PsbZ, Psb30/Ycf12, at least 3 peripheral proteins of the oxygen-evolving complex and a large number of cofactors. It forms dimeric complexes. The extrinsic subunits in red algae are PsbO (OEC33), PsbQ', cytochrome c-550 and PsbU. Requires heme c as cofactor.

It is found in the plastid. Its subcellular location is the chloroplast thylakoid membrane. In terms of biological role, one of the extrinsic, lumenal subunits of photosystem II (PSII). PSII is a light-driven water plastoquinone oxidoreductase, using light energy to abstract electrons from H(2)O, generating a proton gradient subsequently used for ATP formation. The extrinsic proteins stabilize the structure of photosystem II oxygen-evolving complex (OEC), the ion environment of oxygen evolution and protect the OEC against heat-induced inactivation. In Porphyra purpurea (Red seaweed), this protein is Photosystem II extrinsic protein V.